The sequence spans 295 residues: MTSTINKPLDGEGSVQVKQDPKINIEEGALVIAVYGKGGIGKSTTSSNLSAAFSKLGKKVLQIGCDPKHDSTFTLTHKMVPTVIDILEEVDFHSEELRPNDFMFEGFNGVMCVESGGPPAGTGCGGYVTGQTVKLLKEHHLLEDTDVVIFDVLGDVVCGGFAAPLQHANYCLIVTANDFDSIFAMNRIVSAIKAKAKNYKVRLGGVVANRSKDTDQIDKFNERTGLKTMAHFKDVDAIRRSRLKKCTIFEMEPTEDVIEVQNEYLSLAKNMLENVEPLEGNPLKDREIFDLLGFD.

ATP contacts are provided by residues 39–44 (GIGKST) and lysine 68. A Mg(2+)-binding site is contributed by serine 43. The [4Fe-4S] cluster site is built by cysteine 124 and cysteine 158. 209 to 210 (NR) lines the ATP pocket.

The protein belongs to the NifH/BchL/ChlL family. Homodimer. Protochlorophyllide reductase is composed of three subunits; ChlL, ChlN and ChlB. [4Fe-4S] cluster is required as a cofactor.

The catalysed reaction is chlorophyllide a + oxidized 2[4Fe-4S]-[ferredoxin] + 2 ADP + 2 phosphate = protochlorophyllide a + reduced 2[4Fe-4S]-[ferredoxin] + 2 ATP + 2 H2O. The protein operates within porphyrin-containing compound metabolism; chlorophyll biosynthesis (light-independent). Its function is as follows. Component of the dark-operative protochlorophyllide reductase (DPOR) that uses Mg-ATP and reduced ferredoxin to reduce ring D of protochlorophyllide (Pchlide) to form chlorophyllide a (Chlide). This reaction is light-independent. The L component serves as a unique electron donor to the NB-component of the complex, and binds Mg-ATP. The protein is Light-independent protochlorophyllide reductase iron-sulfur ATP-binding protein of Prochlorococcus marinus (strain MIT 9215).